Reading from the N-terminus, the 406-residue chain is Bifunctional enzyme IspD/IspF (406 aa).

The tract at residues 1–247 (MSLIRVNGEA…TLFFNPAKDT (247 aa)) is 2-C-methyl-D-erythritol 4-phosphate cytidylyltransferase. The interval 248-406 (FIGMGFDTHA…HVSMRYKQKL (159 aa)) is 2-C-methyl-D-erythritol 2,4-cyclodiphosphate synthase. 2 residues coordinate a divalent metal cation: Asp-254 and His-256. 4-CDP-2-C-methyl-D-erythritol 2-phosphate is bound by residues 254 to 256 (DTH) and 280 to 281 (HS). An a divalent metal cation-binding site is contributed by His-288. Residues 302–304 (DIG), 307–311 (FPDND), 378–381 (TTME), Phe-385, and Lys-388 each bind 4-CDP-2-C-methyl-D-erythritol 2-phosphate.

It in the N-terminal section; belongs to the IspD/TarI cytidylyltransferase family. IspD subfamily. This sequence in the C-terminal section; belongs to the IspF family. It depends on a divalent metal cation as a cofactor.

It carries out the reaction 2-C-methyl-D-erythritol 4-phosphate + CTP + H(+) = 4-CDP-2-C-methyl-D-erythritol + diphosphate. It catalyses the reaction 4-CDP-2-C-methyl-D-erythritol 2-phosphate = 2-C-methyl-D-erythritol 2,4-cyclic diphosphate + CMP. It functions in the pathway isoprenoid biosynthesis; isopentenyl diphosphate biosynthesis via DXP pathway; isopentenyl diphosphate from 1-deoxy-D-xylulose 5-phosphate: step 2/6. It participates in isoprenoid biosynthesis; isopentenyl diphosphate biosynthesis via DXP pathway; isopentenyl diphosphate from 1-deoxy-D-xylulose 5-phosphate: step 4/6. Functionally, bifunctional enzyme that catalyzes the formation of 4-diphosphocytidyl-2-C-methyl-D-erythritol from CTP and 2-C-methyl-D-erythritol 4-phosphate (MEP) (IspD), and catalyzes the conversion of 4-diphosphocytidyl-2-C-methyl-D-erythritol 2-phosphate (CDP-ME2P) to 2-C-methyl-D-erythritol 2,4-cyclodiphosphate (ME-CPP) with a corresponding release of cytidine 5-monophosphate (CMP) (IspF). The chain is Bifunctional enzyme IspD/IspF from Helicobacter pylori (strain ATCC 700392 / 26695) (Campylobacter pylori).